Here is a 1613-residue protein sequence, read N- to C-terminus: MGAVLRSLLACSFCVLLRAAPLLLYANRRDLRLVDATNGKENATIVVGGLEDAAAVDFVFGHGLIYWSDVSEEAIKRTEFNKSESVQNVVVSGLLSPDGLACDWLGEKLYWTDSETNRIEVSNLDGSLRKVLFWQELDQPRAIALDPSSGFMYWTDWGEVPKIERAGMDGSSRFVIINTEIYWPNGLTLDYQERKLYWADAKLNFIHKSNLDGTNRQAVVKGSLPHPFALTLFEDTLYWTDWNTHSILACNKYTGEGLREIHSNIFSPMDIHAFSQQRQPNATNPCGIDNGGCSHLCLMSPVKPFYQCACPTGVKLMENGKTCKDGATELLLLARRTDLRRISLDTPDFTDIVLQLEDIRHAIAIDYDPVEGYIYWTDDEVRAIRRSFIDGSGSQFVVTAQIAHPDGIAVDWVARNLYWTDTGTDRIEVTRLNGTMRKILISEDLEEPRAIVLDPMVGYMYWTDWGEIPKIERAALDGSDRVVLVNTSLGWPNGLALDYDEGTIYWGDAKTDKIEVMNTDGTGRRVLVEDKIPHIFGFTLLGDYVYWTDWQRRSIERVHKRSAEREVIIDQLPDLMGLKATSVHRVIGSNPCAEDNGGCSHLCLYRPQGLRCACPIGFELIGDMKTCIVPEAFLLFSRRADIRRISLETNNNNVAIPLTGVKEASALDFDVTDNRIYWTDISLKTISRAFMNGSALEHVVEFGLDYPEGMAVDWLGKNLYWADTGTNRIEVSKLDGQHRQVLVWKDLDSPRALALDPAEGFMYWTEWGGKPKIDRAAMDGSERTTLVPNVGRANGLTIDYAKRRLYWTDLDTNLIESSDMLGLNREVIADDLPHPFGLTQYQDYIYWTDWSRRSIERANKTSGQNRTIIQGHLDYVMDILVFHSSRQAGWNECASSNGHCSHLCLAVPVGGFVCGCPAHYSLNADNRTCSAPSTFLLFSQKSAINRMVIDEQQSPDIILPIHSLRNVRAIDYDPLDKQLYWIDSRQNSIRKAHEDGGQGFNVVANSVANQNLEIQPYDLSIDIYSRYIYWTCEATNVIDVTRLDGRSVGVVLKGEQDRPRAIVVNPEKGYMYFTNLQERSPKIERAALDGTEREVLFFSGLSKPIALALDSKLGKLFWADSDLRRIESSDLSGANRIVLEDSNILQPVGLTVFENWLYWIDKQQQMIEKIDMTGREGRTKVQARIAQLSDIHAVKELNLQEYRQHPCAQDNGGCSHICLVKGDGTTRCSCPMHLVLLQDELSCGEPPTCSPQQFTCFTGDIDCIPVAWRCDGFTECEDHSDELNCPVCSESQFQCASGQCIDGALRCNGDANCQDKSDEKNCEVLCLIDQFRCANGQCVGKHKKCDHSVDCSDRSDELDCYPTEEPAPQATNTVGSVIGVIVTIFVSGTIYFICQRMLCPRMKGDGETMTNDYVVHSPASVPLGYVPHPSSLSGSLPGMSRGKSMISSLSIMGGSSGPPYDRAHVTGASSSSSSSTKGTYFPAILNPPPSPATERSHYTMEFGYSSNSPSTHRSYSYRPYSYRHFAPPTTPCSTDVCDSDYAPSRRMTSVATAKGYTSDVNYDSEPVPPPPTPRSQYLSAEENYESCPPSPYTERSYSHHLYPPPPSPCTDSS.

Positions 1–19 are cleaved as a signal peptide; that stretch reads MGAVLRSLLACSFCVLLRA. Positions 20–275 are beta-propeller 1; it reads APLLLYANRR…FSPMDIHAFS (256 aa). At 20–1370 the chain is on the extracellular side; that stretch reads APLLLYANRR…YPTEEPAPQA (1351 aa). 2 N-linked (GlcNAc...) asparagine glycosylation sites follow: Asn42 and Asn81. LDL-receptor class B repeat units follow at residues 63 to 106, 107 to 149, 150 to 193, 194 to 235, and 236 to 277; these read GLIY…DWLG, EKLY…DPSS, GFMY…DYQE, RKLY…LFED, and TLYW…FSQQ. N-linked (GlcNAc...) asparagine glycosylation occurs at Asn281. The EGF-like 1 domain maps to 282–324; it reads ATNPCGIDNGGCSHLCLMSPVKPFYQCACPTGVKLMENGKTCK. 3 disulfide bridges follow: Cys286/Cys297, Cys293/Cys308, and Cys310/Cys323. The tract at residues 328–589 is beta-propeller 2; the sequence is TELLLLARRT…ATSVHRVIGS (262 aa). 5 LDL-receptor class B repeats span residues 372-414, 415-457, 458-501, 502-542, and 543-587; these read GYIY…DWVA, RNLY…DPMV, GYMY…DYDE, GTIY…TLLG, and DYVY…HRVI. 2 N-linked (GlcNAc...) asparagine glycosylation sites follow: Asn433 and Asn486. An EGF-like 2 domain is found at 588–628; the sequence is GSNPCAEDNGGCSHLCLYRPQGLRCACPIGFELIGDMKTCI. 3 disulfides stabilise this stretch: Cys592–Cys603, Cys599–Cys612, and Cys614–Cys627. Positions 631–890 are beta-propeller 3; it reads EAFLLFSRRA…VFHSSRQAGW (260 aa). 5 LDL-receptor class B repeats span residues 674-716, 717-759, 760-802, 803-842, and 843-885; these read NRIY…DWLG, KNLY…DPAE, GFMY…DYAK, RRLY…TQYQ, and DYIY…FHSS. An N-linked (GlcNAc...) asparagine glycan is attached at Asn692. Residues Asn859 and Asn865 are each glycosylated (N-linked (GlcNAc...) asparagine). An EGF-like 3 domain is found at 889-930; it reads GWNECASSNGHCSHLCLAVPVGGFVCGCPAHYSLNADNRTCS. 3 cysteine pairs are disulfide-bonded: Cys893-Cys904, Cys900-Cys914, and Cys916-Cys929. Residue Asn926 is glycosylated (N-linked (GlcNAc...) asparagine). A beta-propeller 4 region spans residues 933-1202; it reads STFLLFSQKS…AVKELNLQEY (270 aa). LDL-receptor class B repeat units lie at residues 977 to 1025, 1026 to 1068, 1069 to 1113, 1114 to 1156, and 1157 to 1198; these read KQLY…DIYS, RYIY…NPEK, GYMY…DSKL, GKLF…FENW, and LYWI…KELN. An EGF-like 4 domain is found at 1203-1244; sequence RQHPCAQDNGGCSHICLVKGDGTTRCSCPMHLVLLQDELSCG. 12 cysteine pairs are disulfide-bonded: Cys1207–Cys1218, Cys1214–Cys1228, Cys1230–Cys1243, Cys1249–Cys1263, Cys1256–Cys1276, Cys1270–Cys1285, Cys1288–Cys1300, Cys1295–Cys1313, Cys1307–Cys1322, Cys1326–Cys1338, Cys1333–Cys1351, and Cys1345–Cys1360. 3 LDL-receptor class A domains span residues 1248-1286, 1287-1323, and 1325-1361; these read TCSP…LNCP, VCSE…KNCE, and LCLI…LDCY. Residues 1371–1393 traverse the membrane as a helical segment; that stretch reads TNTVGSVIGVIVTIFVSGTIYFI. S-palmitoyl cysteine attachment occurs at residues Cys1394 and Cys1399. Residues 1394-1613 are Cytoplasmic-facing; sequence CQRMLCPRMK…PPPSPCTDSS (220 aa). Residue Lys1403 forms a Glycyl lysine isopeptide (Lys-Gly) (interchain with G-Cter in ubiquitin) linkage. Phosphoserine; by CK1 occurs at positions 1420 and 1430. Position 1479 is a phosphothreonine (Thr1479). A PPPSP motif A motif is present at residues 1487-1493; that stretch reads PPPSPAT. The residue at position 1490 (Ser1490) is a Phosphoserine; by CDK14, GRK5 and GRK6. Position 1493 is a phosphothreonine; by CK1 (Thr1493). The short motif at 1527–1534 is the PPPSP motif B element; it reads PPTTPCST. The segment at 1556–1613 is disordered; it reads YTSDVNYDSEPVPPPPTPRSQYLSAEENYESCPPSPYTERSYSHHLYPPPPSPCTDSS. Residues 1568–1575 carry the PPPSP motif C motif; that stretch reads PPPPTPRS. The PPPSP motif D signature appears at 1588–1593; the sequence is PPSPYT. Residues 1602 to 1613 show a composition bias toward pro residues; the sequence is YPPPPSPCTDSS. Positions 1603–1610 match the PPPSP motif E motif; the sequence is PPPPSPCT.

This sequence belongs to the LDLR family. In terms of assembly, homodimer; disulfide-linked. Forms phosphorylated oligomer aggregates on Wnt-signaling. Component of the Wnt-Fzd-LRP5-LRP6 complex. Interacts (via the extracellular domain) with WNT1; the interaction is enhanced by prior formation of the Wnt/Fzd complex. Interacts (via the beta-propeller regions 3 and 4) with WNT3A. Interacts (via the beta-propeller regions 1 and 2) with WNT9B. Interacts with FZD5; the interaction forms a coreceptor complex for Wnt signaling and is inhibited by DKK1 and DRAXIN. Interacts (via beta propeller region) with DKK1; the interaction inhibits FZD5/LRP6 complex formation. Interacts with DKK2. Interacts (via the phosphorylated PPPSP motifs) with AXIN1; the interaction recruits the AXIN1/GSK3B complex to cell surface LRP6 signalosomes. Interacts (via the extracellular domain) with RSPO1; the interaction activates Wnt/beta-catenin signaling. Interacts (via the extracellular domain) with RSPO3 (via the cysteine rich domain); the interaction activates Wnt/beta-catenin signaling. Interacts (via the beta-propeller regions 1 and 2) with SOST; the interaction competes with DKK1 for binding for inhibiting beta-catenin signaling. Interacts (via the cytoplasmic domain) with CSNKIE; the interaction phosphorylates LRP6, binds AXIN1 and inhibits AXIN1/GSK3B-mediated phosphorylation of beta-catenin. Interacts with DRAXIN; the interaction inhibits Wnt signaling. Interacts with GRB10; the interaction prevents AXIN1 binding, thus negatively regulating the Wnt signaling pathway. Interacts with MESD; the interaction prevents the formation of LRP6 aggregates and targets LRP6 to the plasma membrane. Interacts with MACF1. Interacts with DAB2; the interaction involves LRP6 phosphorylation by CK2 and sequesters LRP6 towards clathrin-mediated endocytosis. Interacts with TMEM198. Interacts with CAPRIN2; the interaction promotes LRP6 phosphorylation at Ser-1490. Found in a complex with CAPRIN2, CCNY and CDK14 during G2/M stage; CAPRIN2 functions as a scaffold for the complex by binding to CCNY via its N terminus and to CDK14 via its C terminus. Interacts with LYPD6 (via NxI motif). Forms a ternary complex with DKK1 and KREM1. Interacts with KREM1 in a DKK1-dependent manner. Interacts with MDK: this interaction is calcium dependent. Interacts with LMBR1L. Interacts with GPR37; this interaction promotes LRP6 maturation. In terms of processing, dual phosphorylation of cytoplasmic PPPSP motifs sequentially by GSK3 and CK1 is required for AXIN1-binding, and subsequent stabilization and activation of beta-catenin via preventing GSK3-mediated phosphorylation of beta-catenin. Phosphorylated, in vitro, by GRK5/6 within and outside the PPPSP motifs. Phosphorylation at Ser-1490 by CDK14 during G2/M phase leads to regulation of the Wnt signaling pathway during the cell cycle. Phosphorylation by GSK3B is induced by RPSO1 binding and inhibited by DKK1. Phosphorylated, in vitro, by casein kinase I on Thr-1479. Post-translationally, undergoes gamma-secretase-dependent regulated intramembrane proteolysis (RIP). The extracellular domain is first released by shedding, and then, through the action of gamma-secretase, the intracellular domain (ICD) is released into the cytoplasm where it is free to bind to GSK3B and to activate canonical Wnt signaling. Palmitoylation on the two sites near the transmembrane domain leads to release of LRP6 from the endoplasmic reticulum. In terms of processing, mono-ubiquitinated which retains LRP6 in the endoplasmic reticulum. Ubiquitinated by ZNRF3, leading to its degradation by the proteasome. Post-translationally, N-glycosylation is required for cell surface location. As to expression, expressed in early embryo. Broadly expressed throughout the embryonic ectoderm and in nascent mesoderm, and in endoderm emerging from the primitive streak.

It localises to the cell membrane. It is found in the endoplasmic reticulum. Its subcellular location is the membrane raft. Component of the Wnt-Fzd-LRP5-LRP6 complex that triggers beta-catenin signaling through inducing aggregation of receptor-ligand complexes into ribosome-sized signalosomes. Cell-surface coreceptor of Wnt/beta-catenin signaling, which plays a pivotal role in bone formation. The Wnt-induced Fzd/LRP6 coreceptor complex recruits DVL1 polymers to the plasma membrane which, in turn, recruits the AXIN1/GSK3B-complex to the cell surface promoting the formation of signalosomes and inhibiting AXIN1/GSK3-mediated phosphorylation and destruction of beta-catenin. Required for posterior patterning of the epiblast during gastrulation. The sequence is that of Low-density lipoprotein receptor-related protein 6 (Lrp6) from Mus musculus (Mouse).